A 413-amino-acid polypeptide reads, in one-letter code: Multifunctional CCA protein (413 aa).

2 residues coordinate ATP: Gly-8 and Arg-11. Residues Gly-8 and Arg-11 each contribute to the CTP site. Mg(2+) contacts are provided by Asp-21 and Asp-23. Arg-91, Arg-143, and Arg-146 together coordinate ATP. CTP is bound by residues Arg-91, Arg-143, and Arg-146. One can recognise an HD domain in the interval 232 to 333; that stretch reads TGVHVMMVVD…VRFFERSDAL (102 aa).

This sequence belongs to the tRNA nucleotidyltransferase/poly(A) polymerase family. Bacterial CCA-adding enzyme type 1 subfamily. In terms of assembly, monomer. Can also form homodimers and oligomers. The cofactor is Mg(2+). Ni(2+) serves as cofactor.

It carries out the reaction a tRNA precursor + 2 CTP + ATP = a tRNA with a 3' CCA end + 3 diphosphate. The catalysed reaction is a tRNA with a 3' CCA end + 2 CTP + ATP = a tRNA with a 3' CCACCA end + 3 diphosphate. Functionally, catalyzes the addition and repair of the essential 3'-terminal CCA sequence in tRNAs without using a nucleic acid template. Adds these three nucleotides in the order of C, C, and A to the tRNA nucleotide-73, using CTP and ATP as substrates and producing inorganic pyrophosphate. tRNA 3'-terminal CCA addition is required both for tRNA processing and repair. Also involved in tRNA surveillance by mediating tandem CCA addition to generate a CCACCA at the 3' terminus of unstable tRNAs. While stable tRNAs receive only 3'-terminal CCA, unstable tRNAs are marked with CCACCA and rapidly degraded. This chain is Multifunctional CCA protein, found in Burkholderia ambifaria (strain MC40-6).